Reading from the N-terminus, the 101-residue chain is NAD(P)H-quinone oxidoreductase subunit 4L, chloroplastic (101 aa).

Transmembrane regions (helical) follow at residues 2-22 (MLEHVLVLSAYLFSIGIYGLI), 32-52 (MCLELILNAVNINFVTFSDFF), and 61-81 (IFSIFVIAIAAAEAAIGPAIV).

Belongs to the complex I subunit 4L family. As to quaternary structure, NDH is composed of at least 16 different subunits, 5 of which are encoded in the nucleus.

It localises to the plastid. It is found in the chloroplast thylakoid membrane. The enzyme catalyses a plastoquinone + NADH + (n+1) H(+)(in) = a plastoquinol + NAD(+) + n H(+)(out). It catalyses the reaction a plastoquinone + NADPH + (n+1) H(+)(in) = a plastoquinol + NADP(+) + n H(+)(out). In terms of biological role, NDH shuttles electrons from NAD(P)H:plastoquinone, via FMN and iron-sulfur (Fe-S) centers, to quinones in the photosynthetic chain and possibly in a chloroplast respiratory chain. The immediate electron acceptor for the enzyme in this species is believed to be plastoquinone. Couples the redox reaction to proton translocation, and thus conserves the redox energy in a proton gradient. The protein is NAD(P)H-quinone oxidoreductase subunit 4L, chloroplastic of Morus indica (Mulberry).